The primary structure comprises 320 residues: Methionyl-tRNA formyltransferase (320 aa).

114-117 (SLLP) provides a ligand contact to (6S)-5,6,7,8-tetrahydrofolate.

Belongs to the Fmt family.

The enzyme catalyses L-methionyl-tRNA(fMet) + (6R)-10-formyltetrahydrofolate = N-formyl-L-methionyl-tRNA(fMet) + (6S)-5,6,7,8-tetrahydrofolate + H(+). Functionally, attaches a formyl group to the free amino group of methionyl-tRNA(fMet). The formyl group appears to play a dual role in the initiator identity of N-formylmethionyl-tRNA by promoting its recognition by IF2 and preventing the misappropriation of this tRNA by the elongation apparatus. The sequence is that of Methionyl-tRNA formyltransferase from Acinetobacter baumannii (strain ACICU).